The chain runs to 1916 residues: Endoribonuclease Dicer (1916 aa).

One can recognise a Helicase ATP-binding domain in the interval 51–227; the sequence is LLEAALDHNT…ELEEKIQKLE (177 aa). 64 to 71 is an ATP binding site; that stretch reads LNTGSGKT. The short motif at 175–178 is the DECH box element; the sequence is DECH. Residues 256-595 are required for interaction with PRKRA and TARBP2; that stretch reads DCGPFTDRSG…LRNKCSKSAD (340 aa). The tract at residues 409-433 is disordered; it reads YVSWSDSEDDDDDEEIEEKEKPETN. Phosphoserine occurs at positions 413 and 415. Residues 414–425 show a composition bias toward acidic residues; that stretch reads DSEDDDDDEEIE. Residues 433–602 enclose the Helicase C-terminal domain; it reads NFPSPFTNIL…SADGAEADVH (170 aa). In terms of domain architecture, Dicer dsRNA-binding fold spans 630 to 722; that stretch reads AIGHINRYCA…MPVGKETVKY (93 aa). Positions 726–745 are disordered; the sequence is LDLHDEEETSVPGRPGSTKR. One can recognise a PAZ domain in the interval 895–1042; the sequence is KFMEDIEKSE…LVPELCAIHP (148 aa). Phosphoserine is present on residues S1016 and S1160. The region spanning 1276–1403 is the RNase III 1 domain; the sequence is DSEQSPSVGY…SEKWEKDEMT (128 aa). Positions 1316, 1395, and 1398 each coordinate Mg(2+). Phosphoserine occurs at positions 1456, 1464, and 1466. The segment at 1598-1626 is disordered; sequence ALDPAQENGSSQQKSLSGSCAAPVGPRSS. The span at 1604-1615 shows a compositional bias: polar residues; that stretch reads ENGSSQQKSLSG. An RNase III 2 domain is found at 1660–1818; sequence FETFEKKINY…LAGAIYMDSG (159 aa). E1699, D1804, and E1807 together coordinate Mg(2+). One can recognise a DRBM domain in the interval 1843-1908; it reads VPRSPVRELL…ARRALRSLKA (66 aa). The residue at position 1862 (S1862) is a Phosphoserine.

It belongs to the helicase family. Dicer subfamily. As to quaternary structure, component of the RISC loading complex (RLC), or micro-RNA (miRNA) loading complex (miRLC), which is composed of DICER1, AGO2 and TARBP2; DICER1 and TARBP2 are required to process precursor miRNAs (pre-miRNAs) to mature miRNAs and then load them onto AGO2. Note that the trimeric RLC/miRLC is also referred to as RISC. Interacts with DHX9, AGO1, PIWIL1 and PRKRA. Interacts with AGO2, TARBP2, EIF6, MOV10 and RPL7A (60S ribosome subunit); they form a large RNA-induced silencing complex (RISC). Interacts with BCDIN3D. Interacts (via Dicer dsRNA-binding fold domain) with ALOX5 (via PLAT domain); this interaction enhances arachidonate 5-lipoxygenase activity and modifies the miRNA precursor processing activity of DICER1. Requires Mg(2+) as cofactor. Mn(2+) serves as cofactor. Isoform 1 is expressed in a wide variety of tissues. Isoform 2 is specifically expressed in oocytes during their growth (at protein level).

The protein localises to the cytoplasm. It carries out the reaction Endonucleolytic cleavage to 5'-phosphomonoester.. Double-stranded RNA (dsRNA) endoribonuclease playing a central role in short dsRNA-mediated post-transcriptional gene silencing. Cleaves naturally occurring long dsRNAs and short hairpin pre-microRNAs (miRNA) into fragments of twenty-one to twenty-three nucleotides with 3' overhang of two nucleotides, producing respectively short interfering RNAs (siRNA) and mature microRNAs. SiRNAs and miRNAs serve as guide to direct the RNA-induced silencing complex (RISC) to complementary RNAs to degrade them or prevent their translation. Gene silencing mediated by siRNAs, also called RNA interference, controls the elimination of transcripts from mobile and repetitive DNA elements of the genome but also the degradation of exogenous RNA of viral origin for instance. The miRNA pathway on the other side is a mean to specifically regulate the expression of target genes. Functionally, more active than isoform 1 to process long double-stranded RNA into siRNAs. Responsible for the accumulation of endogenous siRNAs observed in mouse oocytes compared to somatic cells and it regulates meiotic spindle organization in female germline. The protein is Endoribonuclease Dicer (Dicer1) of Mus musculus (Mouse).